The primary structure comprises 264 residues: S-adenosylmethionine decarboxylase proenzyme (264 aa).

The active-site Schiff-base intermediate with substrate; via pyruvic acid is the S112. Position 112 is a pyruvic acid (Ser); by autocatalysis (S112). Residue H117 is the Proton acceptor; for processing activity of the active site. C140 acts as the Proton donor; for catalytic activity in catalysis.

It belongs to the prokaryotic AdoMetDC family. Type 2 subfamily. In terms of assembly, heterooctamer of four alpha and four beta chains arranged as a tetramer of alpha/beta heterodimers. The cofactor is pyruvate. In terms of processing, is synthesized initially as an inactive proenzyme. Formation of the active enzyme involves a self-maturation process in which the active site pyruvoyl group is generated from an internal serine residue via an autocatalytic post-translational modification. Two non-identical subunits are generated from the proenzyme in this reaction, and the pyruvate is formed at the N-terminus of the alpha chain, which is derived from the carboxyl end of the proenzyme. The post-translation cleavage follows an unusual pathway, termed non-hydrolytic serinolysis, in which the side chain hydroxyl group of the serine supplies its oxygen atom to form the C-terminus of the beta chain, while the remainder of the serine residue undergoes an oxidative deamination to produce ammonia and the pyruvoyl group blocking the N-terminus of the alpha chain.

It catalyses the reaction S-adenosyl-L-methionine + H(+) = S-adenosyl 3-(methylsulfanyl)propylamine + CO2. The protein operates within amine and polyamine biosynthesis; S-adenosylmethioninamine biosynthesis; S-adenosylmethioninamine from S-adenosyl-L-methionine: step 1/1. Functionally, catalyzes the decarboxylation of S-adenosylmethionine to S-adenosylmethioninamine (dcAdoMet), the propylamine donor required for the synthesis of the polyamines spermine and spermidine from the diamine putrescine. This chain is S-adenosylmethionine decarboxylase proenzyme, found in Yersinia pseudotuberculosis serotype I (strain IP32953).